Here is a 382-residue protein sequence, read N- to C-terminus: 3-dehydroquinate synthase (382 aa).

NAD(+) is bound by residues E81–K86, G115–D119, T139–S140, K152, and K161. Zn(2+)-binding residues include E194, H256, and H274.

It belongs to the sugar phosphate cyclases superfamily. Dehydroquinate synthase family. Co(2+) is required as a cofactor. The cofactor is Zn(2+). NAD(+) serves as cofactor.

It is found in the cytoplasm. It catalyses the reaction 7-phospho-2-dehydro-3-deoxy-D-arabino-heptonate = 3-dehydroquinate + phosphate. It functions in the pathway metabolic intermediate biosynthesis; chorismate biosynthesis; chorismate from D-erythrose 4-phosphate and phosphoenolpyruvate: step 2/7. Functionally, catalyzes the conversion of 3-deoxy-D-arabino-heptulosonate 7-phosphate (DAHP) to dehydroquinate (DHQ). The polypeptide is 3-dehydroquinate synthase (Bradyrhizobium sp. (strain BTAi1 / ATCC BAA-1182)).